Consider the following 137-residue polypeptide: MTKYTSVNSSLPSLPRQTTPTRPATQTGRWDRMGMQTGNTPSSPLGFETKGSLNGSPTLRTTLDTSLSGTRSHPALRATRWMMGVNDIDSIQGDEDHPHDPGPDSDAKKRCASGKAPKDRPTSSVAVASTIRPPCCG.

Residues 1-12 are compositionally biased toward polar residues; it reads MTKYTSVNSSLP. Residues 1–137 form a disordered region; sequence MTKYTSVNSS…ASTIRPPCCG (137 aa). Residues 15 to 27 are compositionally biased toward low complexity; sequence PRQTTPTRPATQT. The segment covering 51-71 has biased composition (polar residues); that stretch reads GSLNGSPTLRTTLDTSLSGTR. Over residues 94–109 the composition is skewed to basic and acidic residues; sequence DEDHPHDPGPDSDAKK.

It functions in the pathway secondary metabolite biosynthesis. Functionally, part of the gene cluster that mediates the biosynthesis of the tetramic acid Sch210972, a potential anti-HIV fungal natural product that contains a decalin core. The PKS module of cghG together with the enoylreductase cghC catalyze the formation of the polyketide unit which is then conjugated to 4-hydroxyl-4-methyl glutamate (HMG) by the condensation domain of the cghG NRPS module. One unique structural feature of Sch210972 is the tetramic acid motif proposed to be derived from the non-proteinogenic amino acid HMG, by a Dieckmann-type condensation catalyzed by the reductase domain of cghG. The aldolase cghB catalyzes the aldol condensation of 2 molecules of pyruvic acid to yield the intermediate 4-hydroxyl-4-methyl-2-oxoglutarate (HMOG), which can then be stereoselectively transaminated by an unidentified enzyme to form HMG. The Diels-Alderase cghA then uses the Dieckmann product released by cghG as substrate and catalyzes the Diels-Alder cycloaddition to form the decalin ring of Sch210972. CghA also suppresses the nonenzymatic formation of the alternative stereoisomer. In Chaetomium globosum (strain ATCC 6205 / CBS 148.51 / DSM 1962 / NBRC 6347 / NRRL 1970) (Soil fungus), this protein is Sch210972 biosynthesis cluster protein E.